We begin with the raw amino-acid sequence, 623 residues long: Serine/threonine-protein kinase nrc-2 (623 aa).

The segment at 1-215 (MPSTKNANGE…GLGALPPPIR (215 aa)) is disordered. Basic and acidic residues-rich tracts occupy residues 27-36 (SKDHKDRDAH) and 170-180 (LSKEPLEESKD). Over residues 199–209 (LAAPDADGLGA) the composition is skewed to low complexity. A Protein kinase domain is found at 242–532 (FDKIKLIGKG…ASDIKTHPFF (291 aa)). Residues 248–256 (IGKGDVGKV) and Lys271 contribute to the ATP site. Asp367 functions as the Proton acceptor in the catalytic mechanism. Residues 569-596 (VDISGSRQMGLKGEPLESGMVTPGENAV) form a disordered region.

Belongs to the protein kinase superfamily. Ser/Thr protein kinase family. KIN82 subfamily.

It carries out the reaction L-seryl-[protein] + ATP = O-phospho-L-seryl-[protein] + ADP + H(+). The enzyme catalyses L-threonyl-[protein] + ATP = O-phospho-L-threonyl-[protein] + ADP + H(+). Its function is as follows. Controls entry of the cell into the asexual developmental program. Required to repress entry into the conidiation program. This chain is Serine/threonine-protein kinase nrc-2 (nrc-2), found in Neurospora crassa (strain ATCC 24698 / 74-OR23-1A / CBS 708.71 / DSM 1257 / FGSC 987).